Reading from the N-terminus, the 172-residue chain is Crossover junction endodeoxyribonuclease RuvC (172 aa).

Catalysis depends on residues aspartate 11, glutamate 70, and aspartate 142. Positions 11, 70, and 142 each coordinate Mg(2+).

Belongs to the RuvC family. In terms of assembly, homodimer which binds Holliday junction (HJ) DNA. The HJ becomes 2-fold symmetrical on binding to RuvC with unstacked arms; it has a different conformation from HJ DNA in complex with RuvA. In the full resolvosome a probable DNA-RuvA(4)-RuvB(12)-RuvC(2) complex forms which resolves the HJ. Mg(2+) serves as cofactor.

It localises to the cytoplasm. It carries out the reaction Endonucleolytic cleavage at a junction such as a reciprocal single-stranded crossover between two homologous DNA duplexes (Holliday junction).. Its function is as follows. The RuvA-RuvB-RuvC complex processes Holliday junction (HJ) DNA during genetic recombination and DNA repair. Endonuclease that resolves HJ intermediates. Cleaves cruciform DNA by making single-stranded nicks across the HJ at symmetrical positions within the homologous arms, yielding a 5'-phosphate and a 3'-hydroxyl group; requires a central core of homology in the junction. The consensus cleavage sequence is 5'-(A/T)TT(C/G)-3'. Cleavage occurs on the 3'-side of the TT dinucleotide at the point of strand exchange. HJ branch migration catalyzed by RuvA-RuvB allows RuvC to scan DNA until it finds its consensus sequence, where it cleaves and resolves the cruciform DNA. This chain is Crossover junction endodeoxyribonuclease RuvC, found in Hydrogenovibrio crunogenus (strain DSM 25203 / XCL-2) (Thiomicrospira crunogena).